The sequence spans 260 residues: 33 kDa inner dynein arm light chain, axonemal (260 aa).

The disordered stretch occupies residues 1 to 66; that stretch reads MIPPNASLVK…PVESQKAQQT (66 aa). Residues 177-260 adopt a coiled-coil conformation; the sequence is MRKALQAEQG…LEGIIAPNKK (84 aa).

The protein belongs to the inner dynein arm light chain family. May undergo some post-translational modifications that shift its mobility on SDS gels.

May play a dynamic role in flagellar motility. This is 33 kDa inner dynein arm light chain, axonemal from Strongylocentrotus purpuratus (Purple sea urchin).